We begin with the raw amino-acid sequence, 146 residues long: Aminoglycoside N(6')-acetyltransferase type 1 (146 aa).

The N-acetyltransferase domain maps to 1–146 (MNIMPISESQ…RVVYFKKNIG (146 aa)). 4 residues coordinate substrate: W22, H25, Y66, and E79. Residue 81–83 (IFV) coordinates acetyl-CoA. D115 provides a ligand contact to substrate. N120 contributes to the acetyl-CoA binding site. E136 lines the substrate pocket.

In terms of assembly, homodimer.

It carries out the reaction kanamycin B + acetyl-CoA = N(6')-acetylkanamycin B + CoA + H(+). Its function is as follows. Catalyzes the transfer of an acetyl group from acetyl-CoA to the 6'-amino group of aminoglycoside molecules conferring resistance to antibiotics containing the purpurosamine ring including amikacin, kanamycin, tobramycin and netilmicin. The protein is Aminoglycoside N(6')-acetyltransferase type 1 of Acinetobacter baumannii.